Reading from the N-terminus, the 352-residue chain is Ion-translocating oxidoreductase complex subunit D (352 aa).

A run of 5 helical transmembrane segments spans residues 20–40, 42–62, 78–109, 123–143, and 148–168; these read IMLL…RFFG, GTLV…ALVL, ALLT…VIIA, PAMI…TSWL, and IAVN…GHTA. T187 carries the post-translational modification FMN phosphoryl threonine. Transmembrane regions (helical) follow at residues 214 to 234, 242 to 262, 267 to 287, and 301 to 318; these read ILAG…GVWL, WHIP…GWLF, LAAP…FFIL, and LMFG…RSFG.

Belongs to the NqrB/RnfD family. The complex is composed of six subunits: RsxA, RsxB, RsxC, RsxD, RsxE and RsxG. FMN serves as cofactor.

The protein localises to the cell inner membrane. Its function is as follows. Part of a membrane-bound complex that couples electron transfer with translocation of ions across the membrane. Required to maintain the reduced state of SoxR. This Shigella flexneri protein is Ion-translocating oxidoreductase complex subunit D.